Reading from the N-terminus, the 451-residue chain is 3-carboxy-cis,cis-muconate cycloisomerase (451 aa).

The protein belongs to the class-II fumarase/aspartase family.

The enzyme catalyses 2-(carboxymethyl)-5-oxo-2,5-dihydro-2-furoate = 3-carboxy-cis,cis-muconate + H(+). Catalyzes an anti cycloisomerization. The protein is 3-carboxy-cis,cis-muconate cycloisomerase (pcaB) of Bradyrhizobium diazoefficiens (strain JCM 10833 / BCRC 13528 / IAM 13628 / NBRC 14792 / USDA 110).